The sequence spans 86 residues: Phosphocarrier protein HPr (86 aa).

Positions 1–86 (MVKKEAIIKA…LAELIESFKE (86 aa)) constitute an HPr domain. The active-site Pros-phosphohistidine intermediate is His15.

The protein belongs to the HPr family.

It is found in the cytoplasm. Its function is as follows. General (non sugar-specific) component of the phosphoenolpyruvate-dependent sugar phosphotransferase system (sugar PTS). This major carbohydrate active-transport system catalyzes the phosphorylation of incoming sugar substrates concomitantly with their translocation across the cell membrane. The phosphoryl group from phosphoenolpyruvate (PEP) is transferred to the phosphoryl carrier protein HPr by enzyme I. Phospho-HPr then transfers it to the PTS EIIA domain. This chain is Phosphocarrier protein HPr (ptsH), found in Borreliella burgdorferi (strain ATCC 35210 / DSM 4680 / CIP 102532 / B31) (Borrelia burgdorferi).